The primary structure comprises 85 residues: MRGLLIILIKFYKKFISPVLPKSCRFYPTCSTYALEAIERFGAFEGGILAIKRILRCHPFNPGGYDPVPTKEEFLELKLKRRKNK.

Belongs to the UPF0161 family.

The protein resides in the cell inner membrane. Functionally, could be involved in insertion of integral membrane proteins into the membrane. This chain is Putative membrane protein insertion efficiency factor, found in Dictyoglomus thermophilum (strain ATCC 35947 / DSM 3960 / H-6-12).